The chain runs to 45 residues: uncharacterized protein (45 aa).

The C2H2-type zinc finger occupies 2-25; it reads YQCLRCGGIFNKRREVVEHLLVGH.

This is an uncharacterized protein from Sulfolobus spindle-shape virus 1 (SSV1).